Reading from the N-terminus, the 105-residue chain is MIASKFGIGQQVRHSLLGYLGVVVDIDPEYSLDEPSPDELAVNDELRAAPWYHVVMEDDEGQPVHTYLAEAQLSSETQDEHPEQPSMDELARTIRKQLQAPRLRN.

A disordered region spans residues 74-105 (SSETQDEHPEQPSMDELARTIRKQLQAPRLRN).

This sequence belongs to the HspQ family.

The protein resides in the cytoplasm. Involved in the degradation of certain denaturated proteins, including DnaA, during heat shock stress. In Citrobacter koseri (strain ATCC BAA-895 / CDC 4225-83 / SGSC4696), this protein is Heat shock protein HspQ.